A 274-amino-acid polypeptide reads, in one-letter code: Large ribosomal subunit protein uL2 (274 aa).

Disordered regions lie at residues 34-53 (IAPIKNSGGRNSQGKMTMRY) and 216-274 (RRPR…RRKK).

This sequence belongs to the universal ribosomal protein uL2 family. As to quaternary structure, part of the 50S ribosomal subunit. Forms a bridge to the 30S subunit in the 70S ribosome.

One of the primary rRNA binding proteins. Required for association of the 30S and 50S subunits to form the 70S ribosome, for tRNA binding and peptide bond formation. It has been suggested to have peptidyltransferase activity; this is somewhat controversial. Makes several contacts with the 16S rRNA in the 70S ribosome. This chain is Large ribosomal subunit protein uL2, found in Flavobacterium psychrophilum (strain ATCC 49511 / DSM 21280 / CIP 103535 / JIP02/86).